The chain runs to 488 residues: GTPase Der (488 aa).

EngA-type G domains are found at residues 3-166 (PVVA…AEAM) and 199-372 (IKLA…DSAT). GTP-binding positions include 9 to 16 (GRPNVGKS), 56 to 60 (DTGGI), 118 to 121 (NKID), 205 to 212 (GKPNVGKS), 252 to 256 (DTAGV), and 317 to 320 (NKWD). Positions 373–457 (RRVSTSMLTR…PIQLRFQEGD (85 aa)) constitute a KH-like domain.

It belongs to the TRAFAC class TrmE-Era-EngA-EngB-Septin-like GTPase superfamily. EngA (Der) GTPase family. As to quaternary structure, associates with the 50S ribosomal subunit.

Its function is as follows. GTPase that plays an essential role in the late steps of ribosome biogenesis. The sequence is that of GTPase Der from Shewanella sp. (strain MR-7).